An 80-amino-acid chain; its full sequence is Exodeoxyribonuclease 7 small subunit (80 aa).

Belongs to the XseB family. As to quaternary structure, heterooligomer composed of large and small subunits.

The protein localises to the cytoplasm. The catalysed reaction is Exonucleolytic cleavage in either 5'- to 3'- or 3'- to 5'-direction to yield nucleoside 5'-phosphates.. Bidirectionally degrades single-stranded DNA into large acid-insoluble oligonucleotides, which are then degraded further into small acid-soluble oligonucleotides. This Pseudomonas paraeruginosa (strain DSM 24068 / PA7) (Pseudomonas aeruginosa (strain PA7)) protein is Exodeoxyribonuclease 7 small subunit.